A 505-amino-acid chain; its full sequence is Histidine ammonia-lyase (505 aa).

Residues 141 to 143 constitute a cross-link (5-imidazolinone (Ala-Gly)); that stretch reads ASG. 2,3-didehydroalanine (Ser) is present on Ser142.

The protein belongs to the PAL/histidase family. Post-translationally, contains an active site 4-methylidene-imidazol-5-one (MIO), which is formed autocatalytically by cyclization and dehydration of residues Ala-Ser-Gly.

It is found in the cytoplasm. It catalyses the reaction L-histidine = trans-urocanate + NH4(+). It participates in amino-acid degradation; L-histidine degradation into L-glutamate; N-formimidoyl-L-glutamate from L-histidine: step 1/3. This Bacillus cereus (strain AH187) protein is Histidine ammonia-lyase.